Here is a 155-residue protein sequence, read N- to C-terminus: Acyl-CoA-binding domain-containing protein 3 (155 aa).

An ACB domain is found at L3–A88. Residues K15, Y30–K34, K56, and Y75 each bind an acyl-CoA.

The protein belongs to the ACBP family. As to expression, highly expressed in leaves. Expressed at low levels in roots and seeds.

It localises to the cytoplasm. The protein resides in the cytosol. In terms of biological role, binds medium- and long-chain acyl-CoA esters with high affinity. Can interact in vitro with linolenoyl-CoA. Binds phosphatidic acid (PA) and phosphatidylcholine (PC) in vitro. May play a role in the biosynthesis of phospholipids. In Oryza sativa subsp. japonica (Rice), this protein is Acyl-CoA-binding domain-containing protein 3.